Consider the following 116-residue polypeptide: Large ribosomal subunit protein uL18 (116 aa).

It belongs to the universal ribosomal protein uL18 family. Part of the 50S ribosomal subunit; part of the 5S rRNA/L5/L18/L25 subcomplex. Contacts the 5S and 23S rRNAs.

In terms of biological role, this is one of the proteins that bind and probably mediate the attachment of the 5S RNA into the large ribosomal subunit, where it forms part of the central protuberance. This chain is Large ribosomal subunit protein uL18, found in Marinomonas sp. (strain MWYL1).